The chain runs to 130 residues: Protein ApaG (130 aa).

The ApaG domain maps to 3 to 127; sequence SEVTRSIRVT…FSLDSPHGRS (125 aa).

This chain is Protein ApaG, found in Rhodospirillum centenum (strain ATCC 51521 / SW).